The chain runs to 937 residues: AP-2 complex subunit beta (937 aa).

Position 2 is an N-acetylthreonine (Thr2). Position 4 is a phosphoserine (Ser4). Lys265 is subject to N6-acetyllysine. The residue at position 737 (Tyr737) is a Phosphotyrosine; by SRC. Residues 841–937 (WKDIPNENEL…YQVYDSILKN (97 aa)) form an interaction with ARRB1 region. A Phosphotyrosine modification is found at Tyr928.

This sequence belongs to the adaptor complexes large subunit family. Adaptor protein complex 2 (AP-2) is a heterotetramer composed of two large adaptins (alpha-type subunit AP2A1 or AP2A2 and beta-type subunit AP2B1), a medium adaptin (mu-type subunit AP2M1) and a small adaptin (sigma-type subunit AP2S1). Interacts with EPN1. Interacts with EPS15; clathrin competes with EPS15. Interacts with SNAP91; clathrin competes with SNAP91. Interacts with CLTC; clathrin competes with EPS15, SNAP91 and PIP5K1C. Interacts with LDLRAP1. Interacts with AMPH and BIN1. Interacts with ARF6 (GDP-bound). Interacts (dephosphorylated at Tyr-737) with ARRB1; phosphorylation of AP2B1 at Tyr-737 disrupts the interaction. Interacts with SLC2A8. Interacts with SCYL1 and SCYL2. Interacts with TGFBR1 and TGFBR2. Interacts with PIP5K1C; clathrin competes with PIP5K1C. Interacts with DENND1B, but not with DENND1A, nor DENND1C. Interacts with FCHO1. Interacts with RFTN1. Interacts with KIAA1107. Together with AP2A1 or AP2A2 and AP2M1, it interacts with ADAM10; this interaction facilitates ADAM10 endocytosis from the plasma membrane during long-term potentiation in hippocampal neurons. Post-translationally, phosphorylation at Tyr-737 by SRC occurs at the plasma membrane in clathrin-coated vesicles (CCVs). In terms of tissue distribution, expressed in the brain (at protein level).

It localises to the cell membrane. Its subcellular location is the membrane. The protein localises to the coated pit. Component of the adaptor protein complex 2 (AP-2). Adaptor protein complexes function in protein transport via transport vesicles in different membrane traffic pathways. Adaptor protein complexes are vesicle coat components and appear to be involved in cargo selection and vesicle formation. AP-2 is involved in clathrin-dependent endocytosis in which cargo proteins are incorporated into vesicles surrounded by clathrin (clathrin-coated vesicles, CCVs) which are destined for fusion with the early endosome. The clathrin lattice serves as a mechanical scaffold but is itself unable to bind directly to membrane components. Clathrin-associated adaptor protein (AP) complexes which can bind directly to both the clathrin lattice and to the lipid and protein components of membranes are considered to be the major clathrin adaptors contributing the CCV formation. AP-2 also serves as a cargo receptor to selectively sort the membrane proteins involved in receptor-mediated endocytosis. AP-2 seems to play a role in the recycling of synaptic vesicle membranes from the presynaptic surface. AP-2 recognizes Y-X-X-[FILMV] (Y-X-X-Phi) and [ED]-X-X-X-L-[LI] endocytosis signal motifs within the cytosolic tails of transmembrane cargo molecules. AP-2 may also play a role in maintaining normal post-endocytic trafficking through the ARF6-regulated, non-clathrin pathway. During long-term potentiation in hippocampal neurons, AP-2 is responsible for the endocytosis of ADAM10. The AP-2 beta subunit acts via its C-terminal appendage domain as a scaffolding platform for endocytic accessory proteins; at least some clathrin-associated sorting proteins (CLASPs) are recognized by their [DE]-X(1,2)-F-X-X-[FL]-X-X-X-R motif. The AP-2 beta subunit binds to clathrin heavy chain, promoting clathrin lattice assembly; clathrin displaces at least some CLASPs from AP2B1 which probably then can be positioned for further coat assembly. The sequence is that of AP-2 complex subunit beta (AP2B1) from Homo sapiens (Human).